The chain runs to 344 residues: MPALPVIDIRSNHVEDSLPEQIIKGLTSQPKTLPPLLFYSNEGLEHWNHHSRQPDFYPRRQEIEILKQGGNDIARSIAPSSVILDLGSANLEKVGYLLEALEAQEKDVLYFALDISAPQLATTLKEIPSSNFRHVRFAGLHGTFEDGLRWINETPEIRDLPHCVLLLGLTIGNFSRQNAAAFLQNIANHALTGASKNKSSILLSLDSCKVPTKVTRAYTSDGVVPFALQALTYAKALLCDRIDNGIDEKVLSCNLRPEHWHYLSEWNFALGRHEASLIPRFGDVCLGSMLQDIVVKKDEKVRFACSYKYDAKERQKLFLDSGVDQGMVWTNEGCDVAIYELKLA.

It belongs to the methyltransferase superfamily. As to quaternary structure, homodimer.

It catalyses the reaction 4-(3-methylbut-2-enyl)-L-tryptophan + S-adenosyl-L-methionine = 4-(3-methylbut-2-enyl)-L-abrine + S-adenosyl-L-homocysteine + H(+). Its pathway is alkaloid biosynthesis; ergot alkaloid biosynthesis. Its function is as follows. 4-dimethylallyltryptophan N-methyltransferase; part of the gene cluster that mediates the biosynthesis of fungal ergot alkaloid. DmaW catalyzes the first step of ergot alkaloid biosynthesis by condensing dimethylallyl diphosphate (DMAP) and tryptophan to form 4-dimethylallyl-L-tryptophan. The second step is catalyzed by the methyltransferase easF that methylates 4-dimethylallyl-L-tryptophan in the presence of S-adenosyl-L-methionine, resulting in the formation of 4-dimethylallyl-L-abrine. The catalase easC and the FAD-dependent oxidoreductase easE then transform 4-dimethylallyl-L-abrine to chanoclavine-I which is further oxidized by easD in the presence of NAD(+), resulting in the formation of chanoclavine-I aldehyde. Agroclavine dehydrogenase easG then mediates the conversion of chanoclavine-I aldehyde to agroclavine via a non-enzymatic adduct reaction: the substrate is an iminium intermediate that is formed spontaneously from chanoclavine-I aldehyde in the presence of glutathione. The presence of easA is not required to complete this reaction. Further conversion of agroclavine to paspalic acid is a two-step process involving oxidation of agroclavine to elymoclavine and of elymoclavine to paspalic acid, the second step being performed by the elymoclavine oxidase cloA. Paspalic acid is then further converted to D-lysergic acid. Ergopeptines are assembled from D-lysergic acid and three different amino acids by the D-lysergyl-peptide-synthetases composed each of a monomudular and a trimodular nonribosomal peptide synthetase subunit. LpsB and lpsC encode the monomodular subunits responsible for D-lysergic acid activation and incorporation into the ergopeptine backbone. LpsA1 and A2 subunits encode the trimodular nonribosomal peptide synthetase assembling the tripeptide portion of ergopeptines. LpsA1 is responsible for formation of the major ergopeptine, ergotamine, and lpsA2 for alpha-ergocryptine, the minor ergopeptine of the total alkaloid mixture elaborated by C.purpurea. D-lysergyl-tripeptides are assembled by the nonribosomal peptide synthetases and released as N-(D-lysergyl-aminoacyl)-lactams. Cyclolization of the D-lysergyl-tripeptides is performed by the Fe(2+)/2-ketoglutarate-dependent dioxygenase easH which introduces a hydroxyl group into N-(D-lysergyl-aminoacyl)-lactam at alpha-C of the aminoacyl residue followed by spontaneous condensation with the terminal lactam carbonyl group. The sequence is that of 4-dimethylallyltryptophan N-methyltransferase easF from Claviceps purpurea (Ergot fungus).